A 240-amino-acid chain; its full sequence is Small ribosomal subunit protein uS2 (240 aa).

It belongs to the universal ribosomal protein uS2 family. As to quaternary structure, component of the small ribosomal subunit. Mature ribosomes consist of a small (40S) and a large (60S) subunit. The 40S subunit contains about 33 different proteins and 1 molecule of RNA (18S). The 60S subunit contains about 49 different proteins and 3 molecules of RNA (25S, 5.8S and 5S). Interacts with RPS21.

Its subcellular location is the cytoplasm. Required for the assembly and/or stability of the 40S ribosomal subunit. Required for the processing of the 20S rRNA-precursor to mature 18S rRNA in a late step of the maturation of 40S ribosomal subunits. This is Small ribosomal subunit protein uS2 from Enterocytozoon bieneusi (strain H348) (Microsporidian parasite).